The following is a 479-amino-acid chain: Protein kinase 2 (479 aa).

The segment at 1–136 (MGKGQSKIKN…NGNDDEDEGP (136 aa)) is disordered. 2 stretches are compositionally biased toward low complexity: residues 52-65 (AQQQ…TTAA) and 79-96 (IPAP…TPTI). A compositionally biased stretch (polar residues) spans 102 to 115 (NTDNNNINGASNEA). The region spanning 153–407 (FELLNVIGKG…GGEVKQHPWF (255 aa)) is the Protein kinase domain. Residues 159-167 (IGKGSFGKV) and Lys182 each bind ATP. The active-site Proton acceptor is Asp276. At Thr309 the chain carries Phosphothreonine; by autocatalysis. The region spanning 408–479 (KNIDWEKLDR…TYVADSILKD (72 aa)) is the AGC-kinase C-terminal domain. Thr470 bears the Phosphothreonine mark.

The protein belongs to the protein kinase superfamily. AGC Ser/Thr protein kinase family. S6 kinase subfamily. Post-translationally, seems to be myristoylated.

The protein localises to the cytoplasm. Its subcellular location is the cell membrane. The enzyme catalyses L-seryl-[protein] + ATP = O-phospho-L-seryl-[protein] + ADP + H(+). It carries out the reaction L-threonyl-[protein] + ATP = O-phospho-L-threonyl-[protein] + ADP + H(+). Functionally, required for morphogenesis during multicellular development. Phosphorylates talB, gefN, gefS, PI4P 5-kinase and gacQ. The protein is Protein kinase 2 (pkgB) of Dictyostelium discoideum (Social amoeba).